The following is a 315-amino-acid chain: Ribosomal RNA small subunit methyltransferase H (315 aa).

S-adenosyl-L-methionine is bound by residues Ala35 to His37, Asp55, Phe84, Asp105, and Gln112.

Belongs to the methyltransferase superfamily. RsmH family.

It is found in the cytoplasm. The enzyme catalyses cytidine(1402) in 16S rRNA + S-adenosyl-L-methionine = N(4)-methylcytidine(1402) in 16S rRNA + S-adenosyl-L-homocysteine + H(+). Specifically methylates the N4 position of cytidine in position 1402 (C1402) of 16S rRNA. This is Ribosomal RNA small subunit methyltransferase H from Streptococcus agalactiae serotype III (strain NEM316).